The sequence spans 334 residues: Aspartate carbamoyltransferase catalytic subunit (334 aa).

Carbamoyl phosphate contacts are provided by Arg-71 and Thr-72. An L-aspartate-binding site is contributed by Lys-99. Carbamoyl phosphate is bound by residues Arg-121, His-151, and Gln-154. Residues Arg-184 and Arg-239 each contribute to the L-aspartate site. Residues Gly-280 and Pro-281 each contribute to the carbamoyl phosphate site.

This sequence belongs to the aspartate/ornithine carbamoyltransferase superfamily. ATCase family. Heterododecamer (2C3:3R2) of six catalytic PyrB chains organized as two trimers (C3), and six regulatory PyrI chains organized as three dimers (R2).

The enzyme catalyses carbamoyl phosphate + L-aspartate = N-carbamoyl-L-aspartate + phosphate + H(+). It participates in pyrimidine metabolism; UMP biosynthesis via de novo pathway; (S)-dihydroorotate from bicarbonate: step 2/3. Its function is as follows. Catalyzes the condensation of carbamoyl phosphate and aspartate to form carbamoyl aspartate and inorganic phosphate, the committed step in the de novo pyrimidine nucleotide biosynthesis pathway. This is Aspartate carbamoyltransferase catalytic subunit from Pseudomonas fluorescens (strain Pf0-1).